We begin with the raw amino-acid sequence, 183 residues long: MSSGSIHVITGPMFSGKTSELVRRIKRFMLSNFKCIIIKHCGDNRYNEDDINKVYTHDLLFMEATASSNLSVLVPTLLNDGVQVIGIDEAQFFLDIVEFSESMANLGKTVIVAALNGDFKRELFGNVYKLLSLAETVSSLTAICVKCYCDASFSKRVTENKEVMDIGGKDKYIAVCRKCFFSN.

11–18 contacts ATP; that stretch reads GPMFSGKT. The Proton acceptor role is filled by Glu-89. Phe-119 contacts substrate. Positions 144 and 147 each coordinate Zn(2+). 163 to 167 contacts substrate; sequence VMDIG. Residues Cys-176 and Cys-179 each coordinate Zn(2+).

This sequence belongs to the thymidine kinase family.

It catalyses the reaction thymidine + ATP = dTMP + ADP + H(+). In Vertebrata (FPV), this protein is Thymidine kinase (TK).